The primary structure comprises 301 residues: Homeobox protein Hox-D13 (301 aa).

Disordered regions lie at residues 1–20 (MDGL…TPGQ) and 55–75 (GERS…PGSG). Positions 8 to 18 (SSGGGGGGGTP) are enriched in gly residues. The homeobox DNA-binding region spans 234–293 (GRKKRVPYTKLQLKELENEYAINKFINKDKRRRISAATNLSERQVTIWFQNRRVKDKKIV).

This sequence belongs to the Abd-B homeobox family.

Its subcellular location is the nucleus. Its function is as follows. Sequence-specific transcription factor that binds gene promoters and activates their transcription. Part of a developmental regulatory system that provides cells with specific positional identities on the anterior-posterior axis. This is Homeobox protein Hox-D13 (HOXD13) from Gallus gallus (Chicken).